A 480-amino-acid chain; its full sequence is Iron-sulfur cluster assembly SufBD family protein slr0074 (480 aa).

Belongs to the iron-sulfur cluster assembly SufBD family.

The polypeptide is Iron-sulfur cluster assembly SufBD family protein slr0074 (Synechocystis sp. (strain ATCC 27184 / PCC 6803 / Kazusa)).